The sequence spans 185 residues: Ribosome-recycling factor (185 aa).

The disordered stretch occupies residues 138–185 (ALKKQEKDGEITEDEERRLEKEVQKVTDESTKKIDQMADNKRKEIIQG).

This sequence belongs to the RRF family.

Its subcellular location is the cytoplasm. In terms of biological role, responsible for the release of ribosomes from messenger RNA at the termination of protein biosynthesis. May increase the efficiency of translation by recycling ribosomes from one round of translation to another. This Lactobacillus delbrueckii subsp. bulgaricus (strain ATCC BAA-365 / Lb-18) protein is Ribosome-recycling factor.